Reading from the N-terminus, the 406-residue chain is Cysteine desulfurase (406 aa).

Residue Lys-226 is modified to N6-(pyridoxal phosphate)lysine. Cys-364 serves as the catalytic Cysteine persulfide intermediate.

It belongs to the class-V pyridoxal-phosphate-dependent aminotransferase family. Csd subfamily. Homodimer. Interacts with SufE and the SufBCD complex composed of SufB, SufC and SufD. The interaction with SufE is required to mediate the direct transfer of the sulfur atom from the S-sulfanylcysteine. Requires pyridoxal 5'-phosphate as cofactor.

It localises to the cytoplasm. The catalysed reaction is (sulfur carrier)-H + L-cysteine = (sulfur carrier)-SH + L-alanine. The enzyme catalyses L-selenocysteine + AH2 = hydrogenselenide + L-alanine + A + H(+). It participates in cofactor biosynthesis; iron-sulfur cluster biosynthesis. Its function is as follows. Cysteine desulfurases mobilize the sulfur from L-cysteine to yield L-alanine, an essential step in sulfur metabolism for biosynthesis of a variety of sulfur-containing biomolecules. Component of the suf operon, which is activated and required under specific conditions such as oxidative stress and iron limitation. Acts as a potent selenocysteine lyase in vitro, that mobilizes selenium from L-selenocysteine. Selenocysteine lyase activity is however unsure in vivo. This Escherichia coli O6:K15:H31 (strain 536 / UPEC) protein is Cysteine desulfurase.